We begin with the raw amino-acid sequence, 262 residues long: ATP synthase subunit a (262 aa).

A run of 7 helical transmembrane segments spans residues 30–50 (ITSL…LTIF), 64–84 (WNIV…DQIG), 91–111 (LIYF…NILG), 123–143 (ISVT…IGFS), 149–169 (FFSL…LVLI), 195–215 (LFGV…SILL), and 220–240 (IGLP…VALL).

This sequence belongs to the ATPase A chain family. As to quaternary structure, F-type ATPases have 2 components, CF(1) - the catalytic core - and CF(0) - the membrane proton channel. CF(1) has five subunits: alpha(3), beta(3), gamma(1), delta(1), epsilon(1). CF(0) has three main subunits: a, b and c.

It localises to the mitochondrion inner membrane. Functionally, mitochondrial membrane ATP synthase (F(1)F(0) ATP synthase or Complex V) produces ATP from ADP in the presence of a proton gradient across the membrane which is generated by electron transport complexes of the respiratory chain. F-type ATPases consist of two structural domains, F(1) - containing the extramembraneous catalytic core and F(0) - containing the membrane proton channel, linked together by a central stalk and a peripheral stalk. During catalysis, ATP synthesis in the catalytic domain of F(1) is coupled via a rotary mechanism of the central stalk subunits to proton translocation. Key component of the proton channel; it may play a direct role in the translocation of protons across the membrane. The polypeptide is ATP synthase subunit a (ATP6) (Allomyces arbusculus (Aquatic fungus)).